Here is a 977-residue protein sequence, read N- to C-terminus: Kinesin-like protein KIN-14D (977 aa).

The segment covering 1-13 (MSSSNNAAAAAAS) has biased composition (low complexity). The disordered stretch occupies residues 1–20 (MSSSNNAAAAAASPDPSRRR). The Calponin-homology (CH) domain maps to 17–118 (SRRREDVVGW…CILALKDRFG (102 aa)). The stretch at 297 to 384 (KAEETQRIED…TKRRIELEEL (88 aa)) forms a coiled coil. Residues 472–800 (NIRVYCRIRP…LKFAERVSGV (329 aa)) form the Kinesin motor domain. Residue 556 to 563 (GQTGSGKT) coordinates ATP. A coiled-coil region spans residues 812–847 (KEGKDVKELMDQLSLLKDTISKKDEEIDRLQLLNSS). Positions 852-977 (PTRQADSVLK…RNNSTLKRGP (126 aa)) are disordered. Polar residues-rich tracts occupy residues 861–879 (KHSS…TSVG) and 956–977 (RKSS…KRGP).

The protein belongs to the TRAFAC class myosin-kinesin ATPase superfamily. Kinesin family. KIN-14 subfamily.

The chain is Kinesin-like protein KIN-14D from Oryza sativa subsp. japonica (Rice).